Here is a 500-residue protein sequence, read N- to C-terminus: Na(+)/H(+) antiporter NhaB (500 aa).

The next 12 membrane-spanning stretches (helical) occupy residues 34–54 (LLLATLGPVVTGWVLVIQFIF), 58–78 (MALKCYPLMPGGLLLVEALLL), 96–116 (VILLLMFMVAGIHFMKELLLF), 129–149 (AVLSLLFCVLSAFLSAFLDAL), 150–170 (TVTAVIISAAVGFYAVYHRVA), 205–225 (LLMHGAVGTALGGVCTLVGEP), 241–261 (FFLKVAPVSMPVLAAGLVTCV), 311–331 (ILIVCLGLHIAEVGLIGLMVI), 350–370 (FQDAMPFTALLVVFFAVVAVI), 394–414 (MLYLANGLLSAISDNVFVATI), 450–470 (ATPNGQAAFLFLLTSAIAPLI), and 477–497 (MVWMALPYTVVMGGLGWWAVT).

It belongs to the NhaB Na(+)/H(+) (TC 2.A.34) antiporter family.

The protein resides in the cell inner membrane. The catalysed reaction is 2 Na(+)(in) + 3 H(+)(out) = 2 Na(+)(out) + 3 H(+)(in). Functionally, na(+)/H(+) antiporter that extrudes sodium in exchange for external protons. This Pseudomonas entomophila (strain L48) protein is Na(+)/H(+) antiporter NhaB.